The chain runs to 919 residues: Aminodeoxychorismate synthase, chloroplastic (919 aa).

A chloroplast-targeting transit peptide spans methionine 1–arginine 45. Residues arginine 86–arginine 342 form the Glutamine amidotransferase type-1 domain. Cysteine 172 acts as the Nucleophile in catalysis. Residues histidine 316 and glutamate 318 contribute to the active site. The PABB component stretch occupies residues isoleucine 436–methionine 910.

This sequence in the C-terminal section; belongs to the anthranilate synthase component I family.

The protein localises to the plastid. The protein resides in the chloroplast. The catalysed reaction is chorismate + L-glutamine = 4-amino-4-deoxychorismate + L-glutamate. The protein operates within cofactor biosynthesis; tetrahydrofolate biosynthesis; 4-aminobenzoate from chorismate: step 1/2. With respect to regulation, activated by chorismate and inhibited by dihydrofolate and methotrexate. Bifunctional enzyme that catalyzes the biosynthesis of 4-amino-4-deoxychorismate (ADC) from chorismate and glutamine. In the first step, a glutamine amidotransferase generates ammonia that is channelled between the binding sites of glutamine and chorismate and used along with chorismate in the second step, catalyzed by aminodeoxychorismate synthase, to produce ADC. Required for the synthesis of 4-aminobenzoate (PABA), an important component in tetrahydrofolate biosynthesis. Does not possess ADC lyase activity. This chain is Aminodeoxychorismate synthase, chloroplastic (ADCS), found in Arabidopsis thaliana (Mouse-ear cress).